The sequence spans 279 residues: uncharacterized protein (279 aa).

Residues 136 to 279 are disordered; it reads TSNATEASEK…FTSDSSDEED (144 aa). Residues 228 to 238 show a composition bias toward low complexity; the sequence is NNGNGAVYSDS.

This is an uncharacterized protein from Invertebrate iridescent virus 3 (IIV-3).